Reading from the N-terminus, the 432-residue chain is uncharacterized protein (432 aa).

One can recognise a Cytochrome c domain in the interval 223-432 (ASAVRGEALF…KDLIEYLKTR (210 aa)). Heme c-binding residues include C236, C239, and H240.

This is an uncharacterized protein from Sinorhizobium fredii (strain NBRC 101917 / NGR234).